The primary structure comprises 277 residues: Indole-3-glycerol phosphate synthase (277 aa).

It belongs to the TrpC family.

The enzyme catalyses 1-(2-carboxyphenylamino)-1-deoxy-D-ribulose 5-phosphate + H(+) = (1S,2R)-1-C-(indol-3-yl)glycerol 3-phosphate + CO2 + H2O. Its pathway is amino-acid biosynthesis; L-tryptophan biosynthesis; L-tryptophan from chorismate: step 4/5. In Pseudomonas putida (strain GB-1), this protein is Indole-3-glycerol phosphate synthase.